The following is a 308-amino-acid chain: MECSNSCLTIDHVIQLDDDKEIRVWETLPKDNTAVRNNTILIASGFARRMDHFAGLAEYLSSNGFHVIRYDSLHHVGLSSGDINEFTMSIGKDSLLIVIEWLKGRGVNKLGLIAASLSARIAYEISNDVDLSFLVTAVGVVNLRDTLERSLKYDYLQLEIEDLPEDLDFEGHNLGSKVFVRDCFKHNWVTLDSTKNKMKNLDIPFIAFTANDDDWVKKAEVLEMMNSISSTKCKLYSLIGSSHDLGENLVVLRNFYQSVTKAAISLDNDSVDLNVEIFEPKFEELTSVTVQERRLKNKIESEILELMN.

Residues S116, D213, and H243 each act as charge relay system in the active site.

This sequence belongs to the LuxD family.

The protein operates within lipid metabolism; fatty acid reduction for biolumincescence. Its function is as follows. Acyl transferase is part of the fatty acid reductase system required for aldehyde biosynthesis; it produces fatty acids for the luminescent reaction. In Shewanella hanedai (Alteromonas hanedai), this protein is Acyl transferase.